Here is a 292-residue protein sequence, read N- to C-terminus: 33 kDa chaperonin (292 aa).

2 disulfides stabilise this stretch: Cys-236–Cys-238 and Cys-269–Cys-272.

The protein belongs to the HSP33 family. Under oxidizing conditions two disulfide bonds are formed involving the reactive cysteines. Under reducing conditions zinc is bound to the reactive cysteines and the protein is inactive.

The protein localises to the cytoplasm. Functionally, redox regulated molecular chaperone. Protects both thermally unfolding and oxidatively damaged proteins from irreversible aggregation. Plays an important role in the bacterial defense system toward oxidative stress. In Ruminiclostridium cellulolyticum (strain ATCC 35319 / DSM 5812 / JCM 6584 / H10) (Clostridium cellulolyticum), this protein is 33 kDa chaperonin.